Here is an 833-residue protein sequence, read N- to C-terminus: Leucine--tRNA ligase (833 aa).

Residues 41–52 (PYPSGAGLHVGH) carry the 'HIGH' region motif. The 'KMSKS' region motif lies at 610–614 (KMSKS). Position 613 (lysine 613) interacts with ATP.

This sequence belongs to the class-I aminoacyl-tRNA synthetase family.

It is found in the cytoplasm. The enzyme catalyses tRNA(Leu) + L-leucine + ATP = L-leucyl-tRNA(Leu) + AMP + diphosphate. The protein is Leucine--tRNA ligase of Streptococcus suis (strain 98HAH33).